A 179-amino-acid chain; its full sequence is Large ribosomal subunit protein uL6 (179 aa).

This sequence belongs to the universal ribosomal protein uL6 family. Part of the 50S ribosomal subunit.

In terms of biological role, this protein binds to the 23S rRNA, and is important in its secondary structure. It is located near the subunit interface in the base of the L7/L12 stalk, and near the tRNA binding site of the peptidyltransferase center. In Mycolicibacterium gilvum (strain PYR-GCK) (Mycobacterium gilvum (strain PYR-GCK)), this protein is Large ribosomal subunit protein uL6.